Here is a 755-residue protein sequence, read N- to C-terminus: 1,4-alpha-glucan branching enzyme GlgB (755 aa).

The active-site Nucleophile is the aspartate 431. Glutamate 484 functions as the Proton donor in the catalytic mechanism.

This sequence belongs to the glycosyl hydrolase 13 family. GlgB subfamily. As to quaternary structure, monomer.

It catalyses the reaction Transfers a segment of a (1-&gt;4)-alpha-D-glucan chain to a primary hydroxy group in a similar glucan chain.. It participates in glycan biosynthesis; glycogen biosynthesis. Its function is as follows. Catalyzes the formation of the alpha-1,6-glucosidic linkages in glycogen by scission of a 1,4-alpha-linked oligosaccharide from growing alpha-1,4-glucan chains and the subsequent attachment of the oligosaccharide to the alpha-1,6 position. The protein is 1,4-alpha-glucan branching enzyme GlgB of Prochlorococcus marinus (strain NATL1A).